The following is a 368-amino-acid chain: 1-deoxy-D-xylulose 5-phosphate reductoisomerase (368 aa).

NADPH-binding residues include Thr-7, Gly-8, Ser-9, Ile-10, Gly-31, Lys-32, Asn-33, and Asn-113. 1-deoxy-D-xylulose 5-phosphate is bound at residue Lys-114. Residue Glu-115 participates in NADPH binding. Asp-133 serves as a coordination point for Mn(2+). 1-deoxy-D-xylulose 5-phosphate-binding residues include Ser-134, Glu-135, Ser-158, and His-181. Residue Glu-135 coordinates Mn(2+). NADPH is bound at residue Gly-187. Ser-194, Asn-199, Lys-200, and Glu-203 together coordinate 1-deoxy-D-xylulose 5-phosphate. Glu-203 lines the Mn(2+) pocket.

The protein belongs to the DXR family. Mg(2+) serves as cofactor. The cofactor is Mn(2+).

The catalysed reaction is 2-C-methyl-D-erythritol 4-phosphate + NADP(+) = 1-deoxy-D-xylulose 5-phosphate + NADPH + H(+). The protein operates within isoprenoid biosynthesis; isopentenyl diphosphate biosynthesis via DXP pathway; isopentenyl diphosphate from 1-deoxy-D-xylulose 5-phosphate: step 1/6. Catalyzes the NADPH-dependent rearrangement and reduction of 1-deoxy-D-xylulose-5-phosphate (DXP) to 2-C-methyl-D-erythritol 4-phosphate (MEP). The polypeptide is 1-deoxy-D-xylulose 5-phosphate reductoisomerase (Helicobacter pylori (strain Shi470)).